A 129-amino-acid chain; its full sequence is Bacteriohemerythrin (129 aa).

Positions 19, 59, 63, 78, 82, 119, and 124 each coordinate Fe cation.

The protein belongs to the hemerythrin family. In terms of assembly, monomer.

Oxygen-binding protein. May be involved in a storage mechanism or for delivery to oxygen-requiring enzymes. The oxygen-binding site contains two iron atoms. This chain is Bacteriohemerythrin, found in Clostridium acetobutylicum (strain ATCC 824 / DSM 792 / JCM 1419 / IAM 19013 / LMG 5710 / NBRC 13948 / NRRL B-527 / VKM B-1787 / 2291 / W).